The sequence spans 128 residues: Ribonuclease P protein component (128 aa).

The protein belongs to the RnpA family. Consists of a catalytic RNA component (M1 or rnpB) and a protein subunit.

It carries out the reaction Endonucleolytic cleavage of RNA, removing 5'-extranucleotides from tRNA precursor.. RNaseP catalyzes the removal of the 5'-leader sequence from pre-tRNA to produce the mature 5'-terminus. It can also cleave other RNA substrates such as 4.5S RNA. The protein component plays an auxiliary but essential role in vivo by binding to the 5'-leader sequence and broadening the substrate specificity of the ribozyme. The sequence is that of Ribonuclease P protein component from Chromohalobacter salexigens (strain ATCC BAA-138 / DSM 3043 / CIP 106854 / NCIMB 13768 / 1H11).